A 535-amino-acid polypeptide reads, in one-letter code: Probable glucomannan 4-beta-mannosyltransferase 14 (535 aa).

A helical transmembrane segment spans residues Gln-42 to Val-62. The active site involves Asp-131. Positions 193 and 195 each coordinate substrate. Asp-287 is an active-site residue. A run of 4 helical transmembrane segments spans residues Ile-366 to Phe-386, Ile-403 to Leu-423, Ile-482 to Tyr-502, and Leu-503 to Gly-523.

Belongs to the glycosyltransferase 2 family. Plant cellulose synthase-like A subfamily.

It is found in the golgi apparatus membrane. It carries out the reaction GDP-mannose + (glucomannan)n = GDP + (glucomannan)n+1.. In terms of biological role, probable mannan synthase which consists of a 4-beta-mannosyltransferase activity on mannan using GDP-mannose. The beta-1,4-mannan product is the backbone for galactomannan synthesis by galactomannan galactosyltransferase. Galactomannan is a noncellulosic polysaccharides of plant cell wall. This Arabidopsis thaliana (Mouse-ear cress) protein is Probable glucomannan 4-beta-mannosyltransferase 14.